We begin with the raw amino-acid sequence, 117 residues long: Aspartate 1-decarboxylase (117 aa).

Serine 25 serves as the catalytic Schiff-base intermediate with substrate; via pyruvic acid. Residue serine 25 is modified to Pyruvic acid (Ser). Threonine 57 serves as a coordination point for substrate. Tyrosine 58 functions as the Proton donor in the catalytic mechanism. Glycine 72 to alanine 74 serves as a coordination point for substrate.

Belongs to the PanD family. As to quaternary structure, heterooctamer of four alpha and four beta subunits. The cofactor is pyruvate. In terms of processing, is synthesized initially as an inactive proenzyme, which is activated by self-cleavage at a specific serine bond to produce a beta-subunit with a hydroxyl group at its C-terminus and an alpha-subunit with a pyruvoyl group at its N-terminus.

Its subcellular location is the cytoplasm. The enzyme catalyses L-aspartate + H(+) = beta-alanine + CO2. It functions in the pathway cofactor biosynthesis; (R)-pantothenate biosynthesis; beta-alanine from L-aspartate: step 1/1. Catalyzes the pyruvoyl-dependent decarboxylation of aspartate to produce beta-alanine. The sequence is that of Aspartate 1-decarboxylase from Helicobacter pylori (strain ATCC 700392 / 26695) (Campylobacter pylori).